A 144-amino-acid chain; its full sequence is Nucleoside diphosphate kinase (144 aa).

ATP contacts are provided by K9, F57, R85, T91, R102, and N112. H120 serves as the catalytic Pros-phosphohistidine intermediate.

It belongs to the NDK family. As to quaternary structure, homotetramer. It depends on Mg(2+) as a cofactor.

Its subcellular location is the cytoplasm. It carries out the reaction a 2'-deoxyribonucleoside 5'-diphosphate + ATP = a 2'-deoxyribonucleoside 5'-triphosphate + ADP. The catalysed reaction is a ribonucleoside 5'-diphosphate + ATP = a ribonucleoside 5'-triphosphate + ADP. Its function is as follows. Major role in the synthesis of nucleoside triphosphates other than ATP. The ATP gamma phosphate is transferred to the NDP beta phosphate via a ping-pong mechanism, using a phosphorylated active-site intermediate. The polypeptide is Nucleoside diphosphate kinase (Streptococcus uberis (strain ATCC BAA-854 / 0140J)).